The primary structure comprises 108 residues: U-scoloptoxin(16)-Er10a (108 aa).

The N-terminal stretch at 1–24 (MASFTSFCVLFTFCLLLLAHQARS) is a signal peptide.

The protein belongs to the scoloptoxin-16 family. Contains 4 disulfide bonds. In terms of tissue distribution, expressed by the venom gland.

It is found in the secreted. The chain is U-scoloptoxin(16)-Er10a from Ethmostigmus rubripes (Giant centipede).